The primary structure comprises 1215 residues: Homeodomain-interacting protein kinase 3 (1215 aa).

Residue Lys27 forms a Glycyl lysine isopeptide (Lys-Gly) (interchain with G-Cter in SUMO2) linkage. The 329-residue stretch at 197-525 (YEVLDFLGRG…PAETLNHPFV (329 aa)) folds into the Protein kinase domain. ATP-binding positions include 203–211 (LGRGTFGQV) and Lys226. The Proton acceptor role is filled by Asp322. At Tyr359 the chain carries Phosphotyrosine. The tract at residues 767 to 944 (QNRGILVKLM…NSMSDEEQES (178 aa)) is interaction with AR. Residues 796-891 (NTNIPHSAFI…SQRHSLRECK (96 aa)) are interaction with FAS. The segment at 855-1011 (QTIIIADSPS…ENGLNADEHM (157 aa)) is required for localization to nuclear speckles. The SUMO interaction motifs (SIM); required for nuclear localization and kinase activity stretch occupies residues 866 to 918 (AVSVITISSDTDEEETSQRHSLRECKGSLDCEACQSTLNIDRMCSLSSPDSTL). Positions 870–880 (ITISSDTDEEE) are interaction with UBL1. The segment covering 912–929 (SSPDSTLSTSSSGQSSPS) has biased composition (low complexity). The disordered stretch occupies residues 912–987 (SSPDSTLSTS…ELVSSADTET (76 aa)). The segment covering 945–957 (SCDTVDGSPTSDS) has biased composition (polar residues). Residue Lys1208 forms a Glycyl lysine isopeptide (Lys-Gly) (interchain with G-Cter in SUMO) linkage.

The protein belongs to the protein kinase superfamily. CMGC Ser/Thr protein kinase family. HIPK subfamily. In terms of assembly, interacts with Nkx1-2. Interacts with FAS and DAXX. Probably part of a complex consisting of HIPK3, FAS and FADD. Interacts with and stabilizes ligand-bound androgen receptor (AR). Interacts with UBL1/SUMO-1. Binds to NR5A1/SF1, SPEN/MINT and RUNX2. Post-translationally, autophosphorylated, but autophosphorylation is not required for catalytic activity. In terms of processing, may be sumoylated. Overexpressed in multidrug resistant cells. Highly expressed in heart and skeletal muscle, and at lower levels in placenta, pancreas, brain, spleen, prostate, thymus, testis, small intestine, colon and leukocytes. Not found in liver and lung.

The protein resides in the cytoplasm. The protein localises to the nucleus. It catalyses the reaction L-seryl-[protein] + ATP = O-phospho-L-seryl-[protein] + ADP + H(+). The enzyme catalyses L-threonyl-[protein] + ATP = O-phospho-L-threonyl-[protein] + ADP + H(+). Its function is as follows. Serine/threonine-protein kinase involved in transcription regulation, apoptosis and steroidogenic gene expression. Phosphorylates JUN and RUNX2. Seems to negatively regulate apoptosis by promoting FADD phosphorylation. Enhances androgen receptor-mediated transcription. May act as a transcriptional corepressor for NK homeodomain transcription factors. The phosphorylation of NR5A1 activates SF1 leading to increased steroidogenic gene expression upon cAMP signaling pathway stimulation. In osteoblasts, supports transcription activation: phosphorylates RUNX2 that synergizes with SPEN/MINT to enhance FGFR2-mediated activation of the osteocalcin FGF-responsive element (OCFRE). This chain is Homeodomain-interacting protein kinase 3 (HIPK3), found in Homo sapiens (Human).